The chain runs to 437 residues: GTPase Obg (437 aa).

Residues 2–160 enclose the Obg domain; that stretch reads SMFLDTAKIS…RQLELELKIL (159 aa). Residues 161-338 form the OBG-type G domain; that stretch reads ADVGLVGFPS…LLEATAELLA (178 aa). GTP is bound by residues 167–174, 192–196, 214–217, 284–287, and 319–321; these read GFPSVGKS, FTTIV, DLPG, NKMD, and SSL. Residues serine 174 and threonine 194 each contribute to the Mg(2+) site. Residues 359–437 form the OCT domain; sequence GFAEAEKEFE…IGKFEFEFVD (79 aa).

This sequence belongs to the TRAFAC class OBG-HflX-like GTPase superfamily. OBG GTPase family. As to quaternary structure, monomer. The cofactor is Mg(2+).

The protein resides in the cytoplasm. Its function is as follows. An essential GTPase which binds GTP, GDP and possibly (p)ppGpp with moderate affinity, with high nucleotide exchange rates and a fairly low GTP hydrolysis rate. Plays a role in control of the cell cycle, stress response, ribosome biogenesis and in those bacteria that undergo differentiation, in morphogenesis control. The chain is GTPase Obg from Streptococcus pyogenes serotype M28 (strain MGAS6180).